The chain runs to 427 residues: Ribosomal protein uS12 methylthiotransferase RimO (427 aa).

The MTTase N-terminal domain maps to 1–116 (MNFYVDVLGC…IAENIGKESI (116 aa)). The [4Fe-4S] cluster site is built by Cys-10, Cys-46, Cys-79, Cys-145, Cys-149, and Cys-152. One can recognise a Radical SAM core domain in the interval 131–360 (VDEKQYAYVK…MEEQSKISFE (230 aa)). One can recognise a TRAM domain in the interval 363 to 426 (EKMVGKTFKV…VYDLEGKIVE (64 aa)).

Belongs to the methylthiotransferase family. RimO subfamily. Requires [4Fe-4S] cluster as cofactor.

The protein resides in the cytoplasm. It catalyses the reaction L-aspartate(89)-[ribosomal protein uS12]-hydrogen + (sulfur carrier)-SH + AH2 + 2 S-adenosyl-L-methionine = 3-methylsulfanyl-L-aspartate(89)-[ribosomal protein uS12]-hydrogen + (sulfur carrier)-H + 5'-deoxyadenosine + L-methionine + A + S-adenosyl-L-homocysteine + 2 H(+). Catalyzes the methylthiolation of an aspartic acid residue of ribosomal protein uS12. The protein is Ribosomal protein uS12 methylthiotransferase RimO of Thermosipho africanus (strain TCF52B).